The following is a 158-amino-acid chain: NAD(P)H-quinone oxidoreductase subunit J, chloroplastic (158 aa).

Belongs to the complex I 30 kDa subunit family. As to quaternary structure, NDH is composed of at least 16 different subunits, 5 of which are encoded in the nucleus.

Its subcellular location is the plastid. The protein resides in the chloroplast thylakoid membrane. It carries out the reaction a plastoquinone + NADH + (n+1) H(+)(in) = a plastoquinol + NAD(+) + n H(+)(out). The enzyme catalyses a plastoquinone + NADPH + (n+1) H(+)(in) = a plastoquinol + NADP(+) + n H(+)(out). In terms of biological role, NDH shuttles electrons from NAD(P)H:plastoquinone, via FMN and iron-sulfur (Fe-S) centers, to quinones in the photosynthetic chain and possibly in a chloroplast respiratory chain. The immediate electron acceptor for the enzyme in this species is believed to be plastoquinone. Couples the redox reaction to proton translocation, and thus conserves the redox energy in a proton gradient. This chain is NAD(P)H-quinone oxidoreductase subunit J, chloroplastic, found in Ceratophyllum demersum (Rigid hornwort).